A 905-amino-acid chain; its full sequence is Protein translocase subunit SecA (905 aa).

Residues Gln89, 107–111 (GEGKT), and Asp502 each bind ATP. Cys887, Cys889, Cys898, and His899 together coordinate Zn(2+).

Belongs to the SecA family. Monomer and homodimer. Part of the essential Sec protein translocation apparatus which comprises SecA, SecYEG and auxiliary proteins SecDF-YajC and YidC. Zn(2+) serves as cofactor.

It is found in the cell inner membrane. The protein resides in the cytoplasm. The catalysed reaction is ATP + H2O + cellular proteinSide 1 = ADP + phosphate + cellular proteinSide 2.. Its function is as follows. Part of the Sec protein translocase complex. Interacts with the SecYEG preprotein conducting channel. Has a central role in coupling the hydrolysis of ATP to the transfer of proteins into and across the cell membrane, serving both as a receptor for the preprotein-SecB complex and as an ATP-driven molecular motor driving the stepwise translocation of polypeptide chains across the membrane. This is Protein translocase subunit SecA from Rhizobium leguminosarum bv. trifolii (strain WSM2304).